The primary structure comprises 392 residues: 23S rRNA (uracil(747)-C(5))-methyltransferase RlmC (392 aa).

Residues Cys4, Cys12, Cys15, and Cys93 each contribute to the [4Fe-4S] cluster site. Residues Gln218, Phe247, Glu275, and Asn321 each contribute to the S-adenosyl-L-methionine site. Catalysis depends on Cys348, which acts as the Nucleophile.

Belongs to the class I-like SAM-binding methyltransferase superfamily. RNA M5U methyltransferase family. RlmC subfamily.

The catalysed reaction is uridine(747) in 23S rRNA + S-adenosyl-L-methionine = 5-methyluridine(747) in 23S rRNA + S-adenosyl-L-homocysteine + H(+). Its function is as follows. Catalyzes the formation of 5-methyl-uridine at position 747 (m5U747) in 23S rRNA. The chain is 23S rRNA (uracil(747)-C(5))-methyltransferase RlmC from Haemophilus influenzae (strain ATCC 51907 / DSM 11121 / KW20 / Rd).